We begin with the raw amino-acid sequence, 666 residues long: Calcium/calmodulin-dependent protein kinase type II subunit beta (666 aa).

The Protein kinase domain maps to 14-272; the sequence is YQLYEDIGKG…AHEALKHPWV (259 aa). Tyr-17 carries the phosphotyrosine modification. ATP contacts are provided by residues 20 to 28 and Lys-43; that span reads IGKGAFSVV. Catalysis depends on Asp-136, which acts as the Proton acceptor. The tract at residues 283-292 is autoinhibitory domain; it reads HRQETVECLK. Residue Thr-287 is modified to Phosphothreonine; by autocatalysis. Residues 291–301 form a calmodulin-binding region; sequence LKKFNARRKLK. 2 positions are modified to phosphothreonine; by autocatalysis: Thr-306 and Thr-307. Residues 349-534 are disordered; it reads ADGVKPQTNS…IPGPLPTPSR (186 aa). Polar residues predominate over residues 354-369; that stretch reads PQTNSTKNSAAATSPK. A phosphoserine mark is found at Ser-367, Ser-394, and Ser-397. Phosphothreonine occurs at positions 400 and 401. Pro residues predominate over residues 432–447; that stretch reads LPCPSPAPFSPLPAPS. Over residues 479–491 the composition is skewed to low complexity; it reads SPALLGPLSSPSP. Pro residues predominate over residues 514-531; that stretch reads PVGPPPCPSPTIPGPLPT.

It belongs to the protein kinase superfamily. CAMK Ser/Thr protein kinase family. CaMK subfamily. In terms of assembly, CAMK2 is composed of 4 different chains: alpha (CAMK2A), beta (CAMK2B), gamma (CAMK2G), and delta (CAMK2D). The different isoforms assemble into homo- or heteromultimeric holoenzymes composed of 12 subunits with two hexameric rings stacked one on top of the other. Interacts with SYNGAP1 and CAMK2N2. Interacts with MPDZ. Interacts with FOXO3. Interacts (when in a kinase inactive state not associated with calmodulin) with ARC; leading to target ARC to inactive synapses. Interacts with CAMK2N1; this interaction requires CAMK2B activation by Ca(2+). In terms of processing, autophosphorylation of Thr-287 following activation by Ca(2+)/calmodulin. Phosphorylation of Thr-287 locks the kinase into an activated state. As to expression, widely expressed. Expressed in adult and fetal brain. Expression is slightly lower in fetal brain. Expressed in skeletal muscle.

It is found in the cytoplasm. It localises to the cytoskeleton. Its subcellular location is the microtubule organizing center. The protein resides in the centrosome. The protein localises to the sarcoplasmic reticulum membrane. It is found in the synapse. The enzyme catalyses L-seryl-[protein] + ATP = O-phospho-L-seryl-[protein] + ADP + H(+). The catalysed reaction is L-threonyl-[protein] + ATP = O-phospho-L-threonyl-[protein] + ADP + H(+). Its activity is regulated as follows. Activated by Ca(2+)/calmodulin. Binding of calmodulin results in conformational change that relieves intrasteric autoinhibition and allows autophosphorylation of Thr-287 which turns the kinase in a constitutively active form and confers to the kinase a Ca(2+)-independent activity. Calcium/calmodulin-dependent protein kinase that functions autonomously after Ca(2+)/calmodulin-binding and autophosphorylation, and is involved in dendritic spine and synapse formation, neuronal plasticity and regulation of sarcoplasmic reticulum Ca(2+) transport in skeletal muscle. In neurons, plays an essential structural role in the reorganization of the actin cytoskeleton during plasticity by binding and bundling actin filaments in a kinase-independent manner. This structural function is required for correct targeting of CaMK2A, which acts downstream of NMDAR to promote dendritic spine and synapse formation and maintain synaptic plasticity which enables long-term potentiation (LTP) and hippocampus-dependent learning. In developing hippocampal neurons, promotes arborization of the dendritic tree and in mature neurons, promotes dendritic remodeling. Also regulates the migration of developing neurons. Participates in the modulation of skeletal muscle function in response to exercise. In slow-twitch muscles, is involved in regulation of sarcoplasmic reticulum (SR) Ca(2+) transport and in fast-twitch muscle participates in the control of Ca(2+) release from the SR through phosphorylation of triadin, a ryanodine receptor-coupling factor, and phospholamban (PLN/PLB), an endogenous inhibitor of SERCA2A/ATP2A2. In response to interferon-gamma (IFN-gamma) stimulation, catalyzes phosphorylation of STAT1, stimulating the JAK-STAT signaling pathway. Phosphorylates reticulophagy regulator RETREG1 at 'Ser-151' under endoplasmic reticulum stress conditions which enhances RETREG1 oligomerization and its membrane scission and reticulophagy activity. This chain is Calcium/calmodulin-dependent protein kinase type II subunit beta (CAMK2B), found in Homo sapiens (Human).